The sequence spans 678 residues: Inositol-trisphosphate 3-kinase C (678 aa).

Disordered regions lie at residues 26–128 and 151–300; these read LEAL…RRNS and DLQS…LDLS. Over residues 44-58 the composition is skewed to gly residues; the sequence is PGAGGPTGRPEGGGP. 2 stretches are compositionally biased toward basic and acidic residues: residues 61–76 and 107–116; these read WIEESSLHSEAERTDL and EKPRQNKELD. Ser-160 carries the phosphoserine modification. 2 stretches are compositionally biased toward basic and acidic residues: residues 173–196 and 220–236; these read ELDRSDMWQTLPERDNKPRVDNLR and SGKELSADASRTPHDTD. The Nuclear export signal motif lies at 318-326; it reads LCPVPRLII. The interval 328–380 is disordered; the sequence is PETPEPEAQPVGPQSRIEGGTGGFSSASSFDESEDDLVAGGGGTSDPEDRAGS. Phosphothreonine is present on Thr-330. Ser-398 is modified (phosphoserine). Residues Lys-426, 466 to 468, and Asp-479 contribute to the ATP site; that span reads EDL. Residues Lys-481, 502 to 508, and 529 to 536 each bind substrate; these read RKDMYEK and KPRYMQWR. Residues 504-512 form a calmodulin-binding region; sequence DMYEKMVAV. ATP-binding residues include Lys-553 and Asp-633. Substrate is bound at residue Lys-636.

It belongs to the inositol phosphokinase (IPK) family.

Its subcellular location is the nucleus. The protein localises to the cytoplasm. The enzyme catalyses 1D-myo-inositol 1,4,5-trisphosphate + ATP = 1D-myo-inositol 1,3,4,5-tetrakisphosphate + ADP + H(+). Its activity is regulated as follows. Activated by calcium/calmodulin. Inhibited by high concentrations of the substrate Ins(1,2,4)P3, and allosterically activated by the product Ins(1,3,4,5)P4. Its function is as follows. Catalyzes the phosphorylation of 1D-myo-inositol 1,4,5-trisphosphate (InsP3) into 1D-myo-inositol 1,3,4,5-tetrakisphosphate and participates to the regulation of calcium homeostasis. Can phosphorylate inositol 2,4,5-triphosphate to inositol 2,4,5,6-tetraphosphate. In Mus musculus (Mouse), this protein is Inositol-trisphosphate 3-kinase C (Itpkc).